The chain runs to 624 residues: Alpha-amylase 1 (624 aa).

Residues 1 to 28 form the signal peptide; sequence MLLINFFIAVLGVISLSPIVVARYILRR. The CBM21 domain maps to 40–133; the sequence is ESVTGSNHVQ…SDTSVTYTTS (94 aa). An intrachain disulfide couples C177 to C185. W230 contacts substrate. A Ca(2+)-binding site is contributed by N268. H269 contacts substrate. C297 and C311 are joined by a disulfide. A glycan (N-linked (GlcNAc...) asparagine) is linked at N304. Residues E309 and D322 each contribute to the Ca(2+) site. A glycan (N-linked (GlcNAc...) asparagine) is linked at N344. R351 is a binding site for substrate. Residues D353, H357, and E377 each contribute to the Ca(2+) site. D353 (nucleophile) is an active-site residue. A substrate-binding site is contributed by 356–357; that stretch reads KH. The Proton donor role is filled by E377. G381 contacts substrate. Cysteines 387 and 430 form a disulfide. Positions 444 and 491 each coordinate substrate. A disulfide bridge links C587 with C622.

This sequence belongs to the glycosyl hydrolase 13 family. Requires Ca(2+) as cofactor.

It is found in the secreted. It carries out the reaction Endohydrolysis of (1-&gt;4)-alpha-D-glucosidic linkages in polysaccharides containing three or more (1-&gt;4)-alpha-linked D-glucose units.. The protein is Alpha-amylase 1 (LKA1) of Lipomyces kononenkoae (Yeast).